Reading from the N-terminus, the 911-residue chain is Transferrin-binding protein A (911 aa).

The first 24 residues, 1-24, serve as a signal peptide directing secretion; sequence MQQQHLFRLNILCLSLMTALPAYA. The short motif at 38–45 is the TonB box element; sequence DTIQVKAK. A TBDR plug domain is found at 51–176; that stretch reads RDNEVTGLGK…LAGSVAFQTK (126 aa). Positions 187–911 constitute a TBDR beta-barrel domain; the sequence is QWGIQSKTAY…NYTFSLEMKF (725 aa). The TonB C-terminal box motif lies at 894 to 911; the sequence is NRYAAPGRNYTFSLEMKF.

It belongs to the TonB-dependent receptor family. As to quaternary structure, binds both human apo- and holo-transferrin (TF), via the TF C-terminus. Forms a large complex with TF and TbpB.

It is found in the cell outer membrane. Neisseria acquires iron by extracting it from serum transferrin (TF) in its human host. Acts as a TF receptor and is required for TF utilization. Binds both apo- and holo-TF, via the TF C-terminus. This chain is Transferrin-binding protein A, found in Neisseria meningitidis serogroup B.